A 187-amino-acid chain; its full sequence is Large ribosomal subunit protein uL10 (187 aa).

This sequence belongs to the universal ribosomal protein uL10 family. In terms of assembly, part of the ribosomal stalk of the 50S ribosomal subunit. The N-terminus interacts with L11 and the large rRNA to form the base of the stalk. The C-terminus forms an elongated spine to which L12 dimers bind in a sequential fashion forming a multimeric L10(L12)X complex.

Its function is as follows. Forms part of the ribosomal stalk, playing a central role in the interaction of the ribosome with GTP-bound translation factors. The protein is Large ribosomal subunit protein uL10 of Synechococcus sp. (strain JA-2-3B'a(2-13)) (Cyanobacteria bacterium Yellowstone B-Prime).